Consider the following 325-residue polypeptide: Cytosolic Fe-S cluster assembly factor Nubp1 homolog (325 aa).

The interval 1–26 is disordered; it reads MSSGADVPSDAPAHCPGTQSDDAGKA. 4 residues coordinate [4Fe-4S] cluster: Cys15, Cys29, Cys32, and Cys38. 68–75 is an ATP binding site; the sequence is GKGGVGKS. The [4Fe-4S] cluster site is built by Cys243 and Cys246.

Belongs to the Mrp/NBP35 ATP-binding proteins family. NUBP1/NBP35 subfamily. In terms of assembly, heterotetramer of 2 Nubp1 and 2 Nubp2 chains. Requires [4Fe-4S] cluster as cofactor.

It localises to the cytoplasm. In terms of biological role, component of the cytosolic iron-sulfur (Fe/S) protein assembly (CIA) machinery. Required for maturation of extramitochondrial Fe-S proteins. The Nubp1-Nubp2 heterotetramer forms a Fe-S scaffold complex, mediating the de novo assembly of an Fe-S cluster and its transfer to target apoproteins. The protein is Cytosolic Fe-S cluster assembly factor Nubp1 homolog of Anopheles gambiae (African malaria mosquito).